The sequence spans 45 residues: Lysis protein for colicin E1 (45 aa).

Residues 1-17 form the signal peptide; sequence MRKRFFVGIFAINLLVG. Residue cysteine 18 is the site of N-palmitoyl cysteine attachment. Cysteine 18 is lipidated: S-diacylglycerol cysteine.

It is found in the cell outer membrane. Its function is as follows. Lysis proteins are required for both colicin release and partial cell lysis. In Escherichia coli, this protein is Lysis protein for colicin E1 (lys).